Consider the following 276-residue polypeptide: Orotidine 5'-phosphate decarboxylase (276 aa).

The active-site Proton donor is Lys-93.

Belongs to the OMP decarboxylase family. Type 2 subfamily.

The enzyme catalyses orotidine 5'-phosphate + H(+) = UMP + CO2. It participates in pyrimidine metabolism; UMP biosynthesis via de novo pathway; UMP from orotate: step 2/2. This chain is Orotidine 5'-phosphate decarboxylase, found in Halorubrum lacusprofundi (strain ATCC 49239 / DSM 5036 / JCM 8891 / ACAM 34).